We begin with the raw amino-acid sequence, 296 residues long: Glycine--tRNA ligase alpha subunit (296 aa).

The protein belongs to the class-II aminoacyl-tRNA synthetase family. As to quaternary structure, tetramer of two alpha and two beta subunits.

It is found in the cytoplasm. It carries out the reaction tRNA(Gly) + glycine + ATP = glycyl-tRNA(Gly) + AMP + diphosphate. The sequence is that of Glycine--tRNA ligase alpha subunit from Listeria monocytogenes serotype 4b (strain CLIP80459).